We begin with the raw amino-acid sequence, 207 residues long: dITP/XTP pyrophosphatase (207 aa).

8 to 13 (TNNKNK) contributes to the substrate binding site. Aspartate 72 acts as the Proton acceptor in catalysis. Aspartate 72 contributes to the Mg(2+) binding site. Residues serine 73, 157–160 (FGYD), lysine 180, and 185–186 (HR) contribute to the substrate site.

This sequence belongs to the HAM1 NTPase family. In terms of assembly, homodimer. The cofactor is Mg(2+).

The enzyme catalyses XTP + H2O = XMP + diphosphate + H(+). The catalysed reaction is dITP + H2O = dIMP + diphosphate + H(+). It carries out the reaction ITP + H2O = IMP + diphosphate + H(+). In terms of biological role, pyrophosphatase that catalyzes the hydrolysis of nucleoside triphosphates to their monophosphate derivatives, with a high preference for the non-canonical purine nucleotides XTP (xanthosine triphosphate), dITP (deoxyinosine triphosphate) and ITP. Seems to function as a house-cleaning enzyme that removes non-canonical purine nucleotides from the nucleotide pool, thus preventing their incorporation into DNA/RNA and avoiding chromosomal lesions. The chain is dITP/XTP pyrophosphatase from Lactobacillus johnsonii (strain CNCM I-12250 / La1 / NCC 533).